We begin with the raw amino-acid sequence, 169 residues long: Cell division inhibitor SulA (169 aa).

The tract at residues 106-112 (ALRTGNY) is ftsZ binding. Residues 162 to 169 (KIHSNLYH) are lon protease binding.

Belongs to the SulA family. As to quaternary structure, interacts with FtsZ. In terms of processing, is rapidly cleaved and degraded by the Lon protease once DNA damage is repaired.

In terms of biological role, component of the SOS system and an inhibitor of cell division. Accumulation of SulA causes rapid cessation of cell division and the appearance of long, non-septate filaments. In the presence of GTP, binds a polymerization-competent form of FtsZ in a 1:1 ratio, thus inhibiting FtsZ polymerization and therefore preventing it from participating in the assembly of the Z ring. This mechanism prevents the premature segregation of damaged DNA to daughter cells during cell division. The chain is Cell division inhibitor SulA from Escherichia fergusonii (strain ATCC 35469 / DSM 13698 / CCUG 18766 / IAM 14443 / JCM 21226 / LMG 7866 / NBRC 102419 / NCTC 12128 / CDC 0568-73).